Reading from the N-terminus, the 285-residue chain is Diphthine methyl ester synthase (285 aa).

Residues leucine 9, aspartate 84, glycine 87, 112-113, leucine 163, valine 221, and histidine 246 each bind S-adenosyl-L-methionine; that span reads SI.

It belongs to the diphthine synthase family.

It localises to the cytoplasm. It carries out the reaction 2-[(3S)-amino-3-carboxypropyl]-L-histidyl-[translation elongation factor 2] + 4 S-adenosyl-L-methionine = diphthine methyl ester-[translation elongation factor 2] + 4 S-adenosyl-L-homocysteine + 3 H(+). It functions in the pathway protein modification; peptidyl-diphthamide biosynthesis. Its function is as follows. S-adenosyl-L-methionine-dependent methyltransferase that catalyzes four methylations of the modified target histidine residue in translation elongation factor 2 (EF-2), to form an intermediate called diphthine methyl ester. The four successive methylation reactions represent the second step of diphthamide biosynthesis. This is Diphthine methyl ester synthase (dph5) from Emericella nidulans (strain FGSC A4 / ATCC 38163 / CBS 112.46 / NRRL 194 / M139) (Aspergillus nidulans).